Reading from the N-terminus, the 525-residue chain is MEGPAEWGPEAALGPEAVLRFLAERGGRALHAELVQHFRGALGGEPEQRARARAHFKELVNAVATVRVDPADGAKYVHLKKRFCEGPSEPSGDPPRIQVTAEPEAPDGPAGPEARDRLPDAAAPESLPGQGRELGEGEPPAPAHWPPLSAGARRKNSRRDVQPLPRTPAPGPSEDLELPPHGCEEADRGSSLVGATAQRPARQNLRDLVMGSSPQLKRSVCPGGSSPGSSSGGGRGRGGGDSDSASVASSSAEEESSGGGSVTLDPLEHAWMLSASDGKWDSLEGLLTCEPGLLVKRDFITGFTCLHWAAKHGRQELLAMLVNFANKHQLPVNIDARTSGGYTALHLAAMHGHVEVVKLLVGAYDADVDIRDYSGKKASQYLSRSIAEEIKNLVGALDEGDGESAAGSGGGRWRLSKVLPSHLITYKLSHALEDGGDHHHHHHSAEGWVGGKAKDPGRKASGSSSGRIKPRLNKIRFRTQIVHTTPSFRDPEQPLEGRGEEGVGEERPVKGHSPFTLRPKSNVFG.

The segment at 84–263 (CEGPSEPSGD…EESSGGGSVT (180 aa)) is disordered. Ser-88 is modified (phosphoserine). Positions 101-112 (AEPEAPDGPAGP) are enriched in low complexity. Residues Ser-126, Ser-213, and Ser-226 each carry the phosphoserine modification. Residues 230-241 (SSGGGRGRGGGD) show a composition bias toward gly residues. Residues 242–251 (SDSASVASSS) show a composition bias toward low complexity. 2 ANK repeats span residues 301–330 (TGFTCLHWAAKHGRQELLAMLVNFANKHQL) and 340–370 (GGYTALHLAAMHGHVEVVKLLVGAYDADVDI). Residues 434–525 (DGGDHHHHHH…TLRPKSNVFG (92 aa)) form a disordered region. The segment covering 468–477 (IKPRLNKIRF) has biased composition (basic residues). Positions 489–509 (RDPEQPLEGRGEEGVGEERPV) are enriched in basic and acidic residues.

The protein belongs to the SOWAH family.

The polypeptide is Ankyrin repeat domain-containing protein SOWAHC (SOWAHC) (Homo sapiens (Human)).